Consider the following 396-residue polypeptide: Small ribosomal subunit protein mS27 (396 aa).

Belongs to the mitochondrion-specific ribosomal protein mS27 family. Component of the mitochondrial small ribosomal subunit (mt-SSU). Mature N.crassa 74S mitochondrial ribosomes consist of a small (37S) and a large (54S) subunit. The 37S small subunit contains a 16S ribosomal RNA (16S mt-rRNA) and 32 different proteins. The 54S large subunit contains a 23S rRNA (23S mt-rRNA) and 42 different proteins.

The protein resides in the mitochondrion. Component of the mitochondrial ribosome (mitoribosome), a dedicated translation machinery responsible for the synthesis of mitochondrial genome-encoded proteins, including at least some of the essential transmembrane subunits of the mitochondrial respiratory chain. The mitoribosomes are attached to the mitochondrial inner membrane and translation products are cotranslationally integrated into the membrane. The sequence is that of Small ribosomal subunit protein mS27 (mrp13) from Neurospora crassa (strain ATCC 24698 / 74-OR23-1A / CBS 708.71 / DSM 1257 / FGSC 987).